The chain runs to 814 residues: Phosphatidylinositol 3-kinase VPS34 (814 aa).

The 153-residue stretch at 25–177 folds into the C2 PI3K-type domain; sequence LDGNLPVKKS…EKLMNKYERG (153 aa). Residues 274–449 form the PIK helical domain; sequence DRDLKPSNIE…YSTYELLEEN (176 aa). The PI3K/PI4K catalytic domain maps to 532 to 799; the sequence is VAGESSLFKS…LINESVSALF (268 aa). The G-loop stretch occupies residues 538–544; sequence LFKSALH. Positions 668–676 are catalytic loop; that stretch reads GIGDRHLDN. Residues 687–708 are activation loop; it reads HVDFAFILGRDPKPFPPPMKLC.

This sequence belongs to the PI3/PI4-kinase family. Interacts with VPS15. Component of a complex made of VPS38/USL1 and PI3K main subunits such as VPS15, ATG6/VPS30 and VPS34. Binds directly to VPS38/USL1.

The enzyme catalyses a 1,2-diacyl-sn-glycero-3-phospho-(1D-myo-inositol) + ATP = a 1,2-diacyl-sn-glycero-3-phospho-(1D-myo-inositol-3-phosphate) + ADP + H(+). The PI3K inhibitor LY294002 affects phosphatidylinositol 3-phosphate (PI3P) levels and triggers a decrease in proline, hydrophobic and aromatic amino acids, and sugars (e.g. raffinose) accumulation in response to salt treatment correlated with lower P5CS1 expression and higher ProDH1 expression, genes involved in proline biosynthesis and catabolism, respectively. Functionally, involved in the negative regulation of proline, hydrophobic and aromatic amino acids accumulation, especially in response to salt (NaCl), either through inhibition of their synthesis and/or promotion of their catabolism. Triggers defense responses (e.g. pathogenesis related (PR1 and PR5) gene expression and hydrogen peroxide H(2)O(2) burst) to the bacterial pathogen compatible Pseudomonas syringae pv tomato DC3000 (Pst DC3000) and incompatible Pst DC3000 (avrRpt2), by regulating reactive ogygen species (ROS) production and by promoting stomatal closure. The polypeptide is Phosphatidylinositol 3-kinase VPS34 (Arabidopsis thaliana (Mouse-ear cress)).